Here is a 449-residue protein sequence, read N- to C-terminus: Phosphoglucosamine mutase (449 aa).

Ser101 serves as the catalytic Phosphoserine intermediate. Ser101, Asp243, Asp245, and Asp247 together coordinate Mg(2+). Ser101 carries the post-translational modification Phosphoserine.

This sequence belongs to the phosphohexose mutase family. Requires Mg(2+) as cofactor. Post-translationally, activated by phosphorylation.

It catalyses the reaction alpha-D-glucosamine 1-phosphate = D-glucosamine 6-phosphate. In terms of biological role, catalyzes the conversion of glucosamine-6-phosphate to glucosamine-1-phosphate. The protein is Phosphoglucosamine mutase of Syntrophus aciditrophicus (strain SB).